We begin with the raw amino-acid sequence, 187 residues long: Probable nicotinate-nucleotide adenylyltransferase (187 aa).

It belongs to the NadD family.

The enzyme catalyses nicotinate beta-D-ribonucleotide + ATP + H(+) = deamido-NAD(+) + diphosphate. It participates in cofactor biosynthesis; NAD(+) biosynthesis; deamido-NAD(+) from nicotinate D-ribonucleotide: step 1/1. Functionally, catalyzes the reversible adenylation of nicotinate mononucleotide (NaMN) to nicotinic acid adenine dinucleotide (NaAD). This Anaeromyxobacter dehalogenans (strain 2CP-1 / ATCC BAA-258) protein is Probable nicotinate-nucleotide adenylyltransferase.